The following is a 248-amino-acid chain: Small ribosomal subunit protein uS3 (248 aa).

Residues 39–108 form the KH type-2 domain; the sequence is IRKLVSQKLA…TVAVNVAEIP (70 aa). Residues 212 to 248 form a disordered region; the sequence is KTETLARPPRKSDERRREDGERPSRRRPTARRRPGGE. The span at 221–234 shows a compositional bias: basic and acidic residues; the sequence is RKSDERRREDGERP. Over residues 235–248 the composition is skewed to basic residues; the sequence is SRRRPTARRRPGGE.

Belongs to the universal ribosomal protein uS3 family. Part of the 30S ribosomal subunit. Forms a tight complex with proteins S10 and S14.

Functionally, binds the lower part of the 30S subunit head. Binds mRNA in the 70S ribosome, positioning it for translation. This is Small ribosomal subunit protein uS3 from Deinococcus geothermalis (strain DSM 11300 / CIP 105573 / AG-3a).